Consider the following 244-residue polypeptide: 7-cyano-7-deazaguanine synthase (244 aa).

Residue 14-24 coordinates ATP; it reads FSGGQDSATCV. Zn(2+) is bound by residues Cys-202, Cys-217, Cys-220, and Cys-223.

It belongs to the QueC family. Zn(2+) is required as a cofactor.

The enzyme catalyses 7-carboxy-7-deazaguanine + NH4(+) + ATP = 7-cyano-7-deazaguanine + ADP + phosphate + H2O + H(+). It participates in purine metabolism; 7-cyano-7-deazaguanine biosynthesis. Catalyzes the ATP-dependent conversion of 7-carboxy-7-deazaguanine (CDG) to 7-cyano-7-deazaguanine (preQ(0)). The sequence is that of 7-cyano-7-deazaguanine synthase from Burkholderia vietnamiensis (strain G4 / LMG 22486) (Burkholderia cepacia (strain R1808)).